A 93-amino-acid chain; its full sequence is Large ribosomal subunit protein uL23cz/uL23cy (93 aa).

Belongs to the universal ribosomal protein uL23 family. As to quaternary structure, part of the 50S ribosomal subunit.

The protein resides in the plastid. It is found in the chloroplast. Its function is as follows. Binds to 23S rRNA. This Citrus sinensis (Sweet orange) protein is Large ribosomal subunit protein uL23cz/uL23cy (rpl23-A).